The sequence spans 75 residues: uncharacterized protein (75 aa).

This is an uncharacterized protein from Escherichia coli (strain K12).